The sequence spans 142 residues: Required for drug-induced death protein 1 (142 aa).

2 disordered regions span residues 1–32 and 46–66; these read MTVG…DEEA and EAAA…TRGA. The helical transmembrane segment at 116 to 138 threads the bilayer; sequence VVIGLQGFAAAYSAPFAVATSVV.

It is found in the membrane. Regulates drug efflux through modulation of ABCB1 localization and activity. The chain is Required for drug-induced death protein 1 from Homo sapiens (Human).